The chain runs to 301 residues: Bifunctional protein FolD (301 aa).

NADP(+) contacts are provided by residues 166 to 168 (GKS), Ser-191, and Ile-232.

This sequence belongs to the tetrahydrofolate dehydrogenase/cyclohydrolase family. In terms of assembly, homodimer.

The catalysed reaction is (6R)-5,10-methylene-5,6,7,8-tetrahydrofolate + NADP(+) = (6R)-5,10-methenyltetrahydrofolate + NADPH. It carries out the reaction (6R)-5,10-methenyltetrahydrofolate + H2O = (6R)-10-formyltetrahydrofolate + H(+). It participates in one-carbon metabolism; tetrahydrofolate interconversion. Its function is as follows. Catalyzes the oxidation of 5,10-methylenetetrahydrofolate to 5,10-methenyltetrahydrofolate and then the hydrolysis of 5,10-methenyltetrahydrofolate to 10-formyltetrahydrofolate. This Orientia tsutsugamushi (strain Ikeda) (Rickettsia tsutsugamushi) protein is Bifunctional protein FolD.